We begin with the raw amino-acid sequence, 462 residues long: Anthranilate synthase component 1 (462 aa).

L-tryptophan-binding positions include S46 and 243–245 (PHM). Chorismate is bound at residue 278–279 (GT). E305 lines the Mg(2+) pocket. Residues Y394, R414, 428–430 (SGG), and G430 each bind chorismate. E444 provides a ligand contact to Mg(2+).

Belongs to the anthranilate synthase component I family. As to quaternary structure, heterotetramer consisting of two non-identical subunits: a beta subunit (TrpG) and a large alpha subunit (TrpE). The cofactor is Mg(2+).

It catalyses the reaction chorismate + L-glutamine = anthranilate + pyruvate + L-glutamate + H(+). Its pathway is amino-acid biosynthesis; L-tryptophan biosynthesis; L-tryptophan from chorismate: step 1/5. Feedback inhibited by tryptophan. In terms of biological role, part of a heterotetrameric complex that catalyzes the two-step biosynthesis of anthranilate, an intermediate in the biosynthesis of L-tryptophan. In the first step, the glutamine-binding beta subunit (TrpG) of anthranilate synthase (AS) provides the glutamine amidotransferase activity which generates ammonia as a substrate that, along with chorismate, is used in the second step, catalyzed by the large alpha subunit of AS (TrpE) to produce anthranilate. In the absence of TrpG, TrpE can synthesize anthranilate directly from chorismate and high concentrations of ammonia. This is Anthranilate synthase component 1 (trpE) from Leptospira biflexa.